Here is a 134-residue protein sequence, read N- to C-terminus: Transcription antitermination protein NusB (134 aa).

The protein belongs to the NusB family.

Its function is as follows. Involved in transcription antitermination. Required for transcription of ribosomal RNA (rRNA) genes. Binds specifically to the boxA antiterminator sequence of the ribosomal RNA (rrn) operons. This chain is Transcription antitermination protein NusB, found in Shewanella loihica (strain ATCC BAA-1088 / PV-4).